The chain runs to 396 residues: Ribosomal RNA large subunit methyltransferase I (396 aa).

Residues 2 to 81 (SVRLVLAKGR…ESIDIAFFTR (80 aa)) enclose the PUA domain.

The protein belongs to the methyltransferase superfamily. RlmI family.

The protein localises to the cytoplasm. It catalyses the reaction cytidine(1962) in 23S rRNA + S-adenosyl-L-methionine = 5-methylcytidine(1962) in 23S rRNA + S-adenosyl-L-homocysteine + H(+). In terms of biological role, specifically methylates the cytosine at position 1962 (m5C1962) of 23S rRNA. In Escherichia coli (strain SMS-3-5 / SECEC), this protein is Ribosomal RNA large subunit methyltransferase I.